Reading from the N-terminus, the 169-residue chain is Neudesin (169 aa).

A signal peptide spans 1 to 28; the sequence is MAGPAPGRRLVALALIVALAVGLPTAGA. Positions 41-126 constitute a Cytochrome b5 heme-binding domain; that stretch reads VRLFTEEELA…EELESLDDVF (86 aa). The residue at position 133 (Lys-133) is an N6-acetyllysine. A disordered region spans residues 148–169; it reads DGSPNLDFKPEDQPHFDIKDEF. A compositionally biased stretch (basic and acidic residues) spans 155 to 169; it reads FKPEDQPHFDIKDEF.

Belongs to the cytochrome b5 family. MAPR subfamily. As to quaternary structure, interacts with PINK1 and PARK7.

The protein localises to the secreted. Its subcellular location is the extracellular space. It localises to the mitochondrion. It is found in the endoplasmic reticulum. In terms of biological role, acts as a neurotrophic factor in postnatal mature neurons enhancing neuronal survival. Promotes cell proliferation and neurogenesis in undifferentiated neural progenitor cells at the embryonic stage and inhibits differentiation of astrocytes. Its neurotrophic activity is exerted via MAPK1/ERK2, MAPK3/ERK1 and AKT1/AKT pathways. Neurotrophic activity is enhanced by binding to heme. Also acts as an anorexigenic neurotrophic factor that contributes to energy balance. The protein is Neudesin (NENF) of Bos taurus (Bovine).